The primary structure comprises 228 residues: Ribosomal RNA small subunit methyltransferase G (228 aa).

Residues G89, L94, 140-141 (VE), and R159 each bind S-adenosyl-L-methionine.

This sequence belongs to the methyltransferase superfamily. RNA methyltransferase RsmG family.

It localises to the cytoplasm. It carries out the reaction guanosine(527) in 16S rRNA + S-adenosyl-L-methionine = N(7)-methylguanosine(527) in 16S rRNA + S-adenosyl-L-homocysteine. Specifically methylates the N7 position of guanine in position 527 of 16S rRNA. The chain is Ribosomal RNA small subunit methyltransferase G from Burkholderia lata (strain ATCC 17760 / DSM 23089 / LMG 22485 / NCIMB 9086 / R18194 / 383).